The primary structure comprises 110 residues: Large ribosomal subunit protein uL22 (110 aa).

It belongs to the universal ribosomal protein uL22 family. Part of the 50S ribosomal subunit.

Its function is as follows. This protein binds specifically to 23S rRNA; its binding is stimulated by other ribosomal proteins, e.g. L4, L17, and L20. It is important during the early stages of 50S assembly. It makes multiple contacts with different domains of the 23S rRNA in the assembled 50S subunit and ribosome. In terms of biological role, the globular domain of the protein is located near the polypeptide exit tunnel on the outside of the subunit, while an extended beta-hairpin is found that lines the wall of the exit tunnel in the center of the 70S ribosome. In Nitrosomonas europaea (strain ATCC 19718 / CIP 103999 / KCTC 2705 / NBRC 14298), this protein is Large ribosomal subunit protein uL22.